A 496-amino-acid polypeptide reads, in one-letter code: L-arabinose isomerase (496 aa).

The Mn(2+) site is built by glutamate 302, glutamate 329, histidine 346, and histidine 445.

The protein belongs to the arabinose isomerase family. Mn(2+) is required as a cofactor.

It catalyses the reaction beta-L-arabinopyranose = L-ribulose. It participates in carbohydrate degradation; L-arabinose degradation via L-ribulose; D-xylulose 5-phosphate from L-arabinose (bacterial route): step 1/3. Its function is as follows. Catalyzes the conversion of L-arabinose to L-ribulose. This chain is L-arabinose isomerase, found in Thermotoga sp. (strain RQ2).